The primary structure comprises 348 residues: Protein disulfide isomerase CRELD2 (348 aa).

The first 22 residues, 1-22 (MHLPPAAAVGLLLLLLPPPARV), serve as a signal peptide directing secretion. A CXXC motif is present at residues 30–33 (CQRC). 4 disulfide bridges follow: C30–C33, C139–C153, C147–C165, and C167–C176. The EGF-like 1 domain occupies 135–177 (DCQECQGGSQRPCSGNGHCDGDGSRQGDGSCQCHVGYKGPLCI). An FU 1 repeat occupies 192–239 (HSFCTACDESCKTCSGPTNKGCVECEVGWTRVEDACVDVDECAAETPP). An N-linked (GlcNAc...) asparagine glycan is attached at N250. An FU 2 repeat occupies 252–299 (SYTCEECDSTCVGCTGKGPANCKECISGYSKQKGECADIDECSLETKV). Positions 262–265 (CVGC) match the CXXC motif. Disulfide bonds link C262–C265, C293–C307, C300–C316, and C318–C328. Residues 289-329 (DIDECSLETKVCKKENENCYNTPGSFVCVCPEGFEEDRRCL) enclose the EGF-like 2; calcium-binding domain.

This sequence belongs to the CRELD family. As to quaternary structure, interacts with CHRNA4. Component of a complex containing at least CRELD2, MANF, MATN3 and PDIA4.

Its subcellular location is the endoplasmic reticulum. It catalyses the reaction Catalyzes the rearrangement of -S-S- bonds in proteins.. Functionally, protein disulfide isomerase. Might play a role in the unfolded protein response. May regulate transport of alpha4-beta2 neuronal acetylcholine receptor. This chain is Protein disulfide isomerase CRELD2 (CRELD2), found in Cricetulus griseus (Chinese hamster).